We begin with the raw amino-acid sequence, 550 residues long: Hydroxylamine reductase (550 aa).

[4Fe-4S] cluster-binding residues include Cys-5, Cys-8, Cys-17, and Cys-23. Positions 250, 274, 319, 405, 433, 458, 492, and 494 each coordinate hybrid [4Fe-2O-2S] cluster. Cys-405 is modified (cysteine persulfide).

This sequence belongs to the HCP family. [4Fe-4S] cluster is required as a cofactor. It depends on hybrid [4Fe-2O-2S] cluster as a cofactor.

The protein resides in the cytoplasm. It catalyses the reaction A + NH4(+) + H2O = hydroxylamine + AH2 + H(+). In terms of biological role, catalyzes the reduction of hydroxylamine to form NH(3) and H(2)O. This chain is Hydroxylamine reductase, found in Geobacter sulfurreducens (strain ATCC 51573 / DSM 12127 / PCA).